A 219-amino-acid chain; its full sequence is Thiamine-phosphate synthase (219 aa).

4-amino-2-methyl-5-(diphosphooxymethyl)pyrimidine is bound by residues 44-48 and Asn-79; that span reads QFREK. Mg(2+) is bound by residues Asp-80 and Asp-99. Residue Ser-117 participates in 4-amino-2-methyl-5-(diphosphooxymethyl)pyrimidine binding. 143-145 provides a ligand contact to 2-[(2R,5Z)-2-carboxy-4-methylthiazol-5(2H)-ylidene]ethyl phosphate; the sequence is TST. Lys-146 is a binding site for 4-amino-2-methyl-5-(diphosphooxymethyl)pyrimidine. Residues Gly-175 and 195–196 each bind 2-[(2R,5Z)-2-carboxy-4-methylthiazol-5(2H)-ylidene]ethyl phosphate; that span reads IS.

It belongs to the thiamine-phosphate synthase family. It depends on Mg(2+) as a cofactor.

The enzyme catalyses 2-[(2R,5Z)-2-carboxy-4-methylthiazol-5(2H)-ylidene]ethyl phosphate + 4-amino-2-methyl-5-(diphosphooxymethyl)pyrimidine + 2 H(+) = thiamine phosphate + CO2 + diphosphate. The catalysed reaction is 2-(2-carboxy-4-methylthiazol-5-yl)ethyl phosphate + 4-amino-2-methyl-5-(diphosphooxymethyl)pyrimidine + 2 H(+) = thiamine phosphate + CO2 + diphosphate. It catalyses the reaction 4-methyl-5-(2-phosphooxyethyl)-thiazole + 4-amino-2-methyl-5-(diphosphooxymethyl)pyrimidine + H(+) = thiamine phosphate + diphosphate. It functions in the pathway cofactor biosynthesis; thiamine diphosphate biosynthesis; thiamine phosphate from 4-amino-2-methyl-5-diphosphomethylpyrimidine and 4-methyl-5-(2-phosphoethyl)-thiazole: step 1/1. In terms of biological role, condenses 4-methyl-5-(beta-hydroxyethyl)thiazole monophosphate (THZ-P) and 2-methyl-4-amino-5-hydroxymethyl pyrimidine pyrophosphate (HMP-PP) to form thiamine monophosphate (TMP). The chain is Thiamine-phosphate synthase from Bacillus cereus (strain B4264).